Reading from the N-terminus, the 255-residue chain is MFIGIVSLFPEMFRAITDYGVTGRAVKNGLLSVQCWSPRDFTYDRHRTVDDRPYGGGPGMLMMVQPLREAIHAAKAAAGEGAKVIYLSPQGRKLDQTGVCELAANPKMILVCGRYEGVDERVIQTEIDEEWSIGDYVLSGGELPAMTLIDSVARFIPGVLGHQASAEEDSFADGLLDCPHYTRPEVLEGMEVPPVLLSGNHAEIRRWRLKQSLGRTWLRRPELLESLALTDEQAVLLAEFQREHQTKQQDYEGNV.

S-adenosyl-L-methionine-binding positions include Gly113 and 133–138; that span reads IGDYVL.

This sequence belongs to the RNA methyltransferase TrmD family. In terms of assembly, homodimer.

It is found in the cytoplasm. The enzyme catalyses guanosine(37) in tRNA + S-adenosyl-L-methionine = N(1)-methylguanosine(37) in tRNA + S-adenosyl-L-homocysteine + H(+). Specifically methylates guanosine-37 in various tRNAs. The protein is tRNA (guanine-N(1)-)-methyltransferase of Serratia proteamaculans (strain 568).